The chain runs to 686 residues: MVHDSTDDPDDTRVRKSRRGTALDAPPQETAPPDLDPATTGGDDEDDALLPDILEESGAVGEEPLASGHEAIERAVRLAPTSPGVYRMLNANADVLYVGKAKNVKKRLSNYARQSAPQPARILRMIAATVTVEIVSTNTETEALLLEANLIKQLRPRFNVQLRDDKSFPYILITGDHWAPQILKHRGAQTRPGRYFGPFASAGAVNRTITALQRAFLIRSCTDSFFESRSRPCLLYQIRRCAGPCTREIDFPGYTTLVREATDFLSGKSHAVKQELAGEMEKAANELEFETAALYRDRLAALSAIQSQQGINPRTVEEADVFAIHQEGGFSCVEVFFFRTGQNWGNRAYFPRAEKTFTPEEVLGSFLAQFYDDKPPPKNILLSHEIEESELLANALSIKAGHKIEVTAPKRGEKKELVAHALTNAREALGRKLADTATQGRLLDAMATTLSLPHAPKRIEVYDNSHIQGTNAVGAMIVAGPDGFVKNQYRKFNIKSEGLTPGDDYGMMREVLERRFKRLINPPEEGAKVKDDDFPQWPDLVIIDGGRGQLNAVREIFANLGLTQVSLMSVAKGPDRDAGRETLFMPEREAIKLEPRDPVLYFIQRLRDEAHRFVIGSHRKLRKKDIREAGLQEIPGIGPSRKRALLHHFGTLKEIERASIADLGKVPGVSAESARRIFEYFHPQPG.

Basic and acidic residues predominate over residues 1-14 (MVHDSTDDPDDTRV). The segment at 1 to 48 (MVHDSTDDPDDTRVRKSRRGTALDAPPQETAPPDLDPATTGGDDEDDA) is disordered. The 80-residue stretch at 81 to 160 (TSPGVYRMLN…IKQLRPRFNV (80 aa)) folds into the GIY-YIG domain. The 36-residue stretch at 270-305 (HAVKQELAGEMEKAANELEFETAALYRDRLAALSAI) folds into the UVR domain.

Belongs to the UvrC family. Interacts with UvrB in an incision complex.

It is found in the cytoplasm. Functionally, the UvrABC repair system catalyzes the recognition and processing of DNA lesions. UvrC both incises the 5' and 3' sides of the lesion. The N-terminal half is responsible for the 3' incision and the C-terminal half is responsible for the 5' incision. In Bradyrhizobium diazoefficiens (strain JCM 10833 / BCRC 13528 / IAM 13628 / NBRC 14792 / USDA 110), this protein is UvrABC system protein C.